Reading from the N-terminus, the 312-residue chain is GATA zinc finger domain-containing protein 20 (312 aa).

Disordered regions lie at residues 1-45 (MGKR…PQQP) and 213-232 (TIGS…TNTN). Over residues 29 to 45 (QQQQQQQEQQPQQPQQP) the composition is skewed to low complexity. The GATA-type zinc-finger motif lies at 260–287 (CYVCGVTETPYWRRGTDEGVMVDLCNAC).

The protein is GATA zinc finger domain-containing protein 20 (gtaT) of Dictyostelium discoideum (Social amoeba).